A 258-amino-acid chain; its full sequence is Acetylglutamate kinase (258 aa).

Residues 41 to 42 (GG), arginine 63, and asparagine 156 each bind substrate.

The protein belongs to the acetylglutamate kinase family. ArgB subfamily.

It is found in the cytoplasm. The catalysed reaction is N-acetyl-L-glutamate + ATP = N-acetyl-L-glutamyl 5-phosphate + ADP. It participates in amino-acid biosynthesis; L-arginine biosynthesis; N(2)-acetyl-L-ornithine from L-glutamate: step 2/4. Its function is as follows. Catalyzes the ATP-dependent phosphorylation of N-acetyl-L-glutamate. This is Acetylglutamate kinase from Bacillus amyloliquefaciens (Bacillus velezensis).